Here is a 208-residue protein sequence, read N- to C-terminus: Imidazoleglycerol-phosphate dehydratase (208 aa).

This sequence belongs to the imidazoleglycerol-phosphate dehydratase family.

Its subcellular location is the cytoplasm. The enzyme catalyses D-erythro-1-(imidazol-4-yl)glycerol 3-phosphate = 3-(imidazol-4-yl)-2-oxopropyl phosphate + H2O. It participates in amino-acid biosynthesis; L-histidine biosynthesis; L-histidine from 5-phospho-alpha-D-ribose 1-diphosphate: step 6/9. This is Imidazoleglycerol-phosphate dehydratase from Psychrobacter sp. (strain PRwf-1).